We begin with the raw amino-acid sequence, 475 residues long: Protein translocase subunit SecD (475 aa).

Helical transmembrane passes span 7 to 27 (LLIT…SLKF), 313 to 333 (KGFM…FIYY), 338 to 358 (LIAD…MAYL), 364 to 384 (LPGV…NVLI), 410 to 430 (FWTI…LFQF), and 437 to 457 (GFAV…VTVT).

The protein belongs to the SecD/SecF family. SecD subfamily. Forms a complex with SecF. Part of the essential Sec protein translocation apparatus which comprises SecA, SecYEG and auxiliary proteins SecDF. Other proteins may also be involved.

It is found in the cell inner membrane. Its function is as follows. Part of the Sec protein translocase complex. Interacts with the SecYEG preprotein conducting channel. SecDF uses the proton motive force (PMF) to complete protein translocation after the ATP-dependent function of SecA. In Endomicrobium trichonymphae, this protein is Protein translocase subunit SecD.